The following is a 211-amino-acid chain: Dual specificity protein phosphatase 26 (211 aa).

Residues 60–207 (NHADEVWPGL…LLALDRRLRQ (148 aa)) form the Tyrosine-protein phosphatase domain. Cys152 acts as the Phosphocysteine intermediate in catalysis.

Belongs to the protein-tyrosine phosphatase family. Non-receptor class dual specificity subfamily. As to quaternary structure, interacts with HSF4. In terms of tissue distribution, brain. In the brain it is expressed ubiquitously except in the hippocampus. Expressed in embryonal cancers (retinoblastoma, neuroepithilioma and neuroblastoma) and in anaplatic thyroid cancer.

Its subcellular location is the cytoplasm. It localises to the nucleus. The protein localises to the golgi apparatus. It carries out the reaction O-phospho-L-tyrosyl-[protein] + H2O = L-tyrosyl-[protein] + phosphate. It catalyses the reaction O-phospho-L-seryl-[protein] + H2O = L-seryl-[protein] + phosphate. The enzyme catalyses O-phospho-L-threonyl-[protein] + H2O = L-threonyl-[protein] + phosphate. Inactivates MAPK1 and MAPK3 which leads to dephosphorylation of heat shock factor protein 4 and a reduction in its DNA-binding activity. Inhibits MAP kinase p38 by dephosphorylating it and inhibits p38-mediated apoptosis in anaplastic thyroid cancer cells. Can also induce activation of MAP kinase p38 and c-Jun N-terminal kinase (JNK). The protein is Dual specificity protein phosphatase 26 (DUSP26) of Homo sapiens (Human).